The sequence spans 578 residues: Keratin, type II cytoskeletal 1b (578 aa).

Residues 1-163 form a head region; the sequence is MSHQFSSQSA…DPEIQRIKTQ (163 aa). Arg-95 is modified (omega-N-methylarginine). Residues 164 to 200 are coil 1A; the sequence is EREQIMVLNNKFASFIDKVRFLEQQNQVLQTKWELLQ. An IF rod domain is found at 164–477; sequence EREQIMVLNN…QLLEGEESRM (314 aa). A linker 1 region spans residues 201 to 219; the sequence is QVNTSTGTNNLEPLLENYI. Positions 220–311 are coil 1B; that stretch reads GDLRRQVDLL…LFLTELSQVQ (92 aa). Residues 312 to 335 are linker 12; that stretch reads THISDTNVILSMDNNRSLDLDSII. The tract at residues 336-474 is coil 2; sequence DAVRTQYELI…TYRQLLEGEE (139 aa). The interval 475–578 is tail; the sequence is SRMSGELQSH…TNTSHRRILE (104 aa). Omega-N-methylarginine is present on Arg-523. Residues 547 to 556 show a composition bias toward gly residues; it reads GSYGGSGRSG. Positions 547–578 are disordered; it reads GSYGGSGRSGRGSSRVQIIQTSTNTSHRRILE. The segment covering 562 to 571 has biased composition (polar residues); sequence VQIIQTSTNT.

This sequence belongs to the intermediate filament family. In terms of processing, undergoes deimination of some arginine residues (citrullination). As to expression, expressed exclusively in skin.

The protein is Keratin, type II cytoskeletal 1b (KRT77) of Homo sapiens (Human).